Consider the following 20-residue polypeptide: Large ribosomal subunit protein bL31 (20 aa).

Residues Xaa-16 and Xaa-18 each contribute to the Zn(2+) site.

The protein belongs to the bacterial ribosomal protein bL31 family. Type A subfamily. In terms of assembly, part of the 50S ribosomal subunit. Zn(2+) is required as a cofactor.

Binds the 23S rRNA. This chain is Large ribosomal subunit protein bL31 (rpmE), found in Ectopseudomonas mendocina (Pseudomonas mendocina).